A 179-amino-acid polypeptide reads, in one-letter code: Large ribosomal subunit protein uL6 (179 aa).

It belongs to the universal ribosomal protein uL6 family. Part of the 50S ribosomal subunit.

In terms of biological role, this protein binds to the 23S rRNA, and is important in its secondary structure. It is located near the subunit interface in the base of the L7/L12 stalk, and near the tRNA binding site of the peptidyltransferase center. This Rhodococcus jostii (strain RHA1) protein is Large ribosomal subunit protein uL6.